The chain runs to 577 residues: MNIQALLSEKVSQAMIAAGAPADCEPQVRQSAKVQFGDYQANGMMAVAKKLGMAPRQLAEQVLTHLDLSGIASKVEIAGPGFINIFLEPAFLAEQVQQALASDRLGVSQPTRQTIVVDYSAPNVAKEMHVGHLRSTIIGDAAVRTLEFLGHHVIRANHVGDWGTQFGMLIAWLEKQQQENAGDMALADLEGFYRDAKKHYDEDEAFAERARNYVVKLQSGDTYFREMWRKLVDITMTQNQITYDRLNVTLTRDDVMGESLYNPMLPGIVADLKAKGLAVESEGATVVFLDEFKNKEGDPMGVIIQKKDGGYLYTTTDIACAKYRYETLHADRVLYYIDSRQHQHLMQAWTIVRKAGYVPDSVPLEHHMFGMMLGKDGKPFKTRAGGTVKLADLLDEALERARRLVAEKNPDMPADELEKLANAVGIGAVKYADLSKNRTTDYIFDWDNMLAFEGNTAPYMQYAYTRVLSVFRKANIDEQALASAPVIISEDREAQLAARLLQFEETLTVVAREGTPHVMCAYLYDVAGLFSGFYEHCPILSAENDAVRNSRLKLAQLTAKTLKLGLDTLGIETVERM.

The short motif at 122–132 is the 'HIGH' region element; it reads PNVAKEMHVGH.

It belongs to the class-I aminoacyl-tRNA synthetase family. Monomer.

Its subcellular location is the cytoplasm. It catalyses the reaction tRNA(Arg) + L-arginine + ATP = L-arginyl-tRNA(Arg) + AMP + diphosphate. The chain is Arginine--tRNA ligase (argS) from Salmonella typhimurium (strain SL1344).